We begin with the raw amino-acid sequence, 140 residues long: Respiratory supercomplex factor 1, mitochondrial (140 aa).

The HIG1 domain maps to 1 to 79 (MNTLQKIAYR…KESAEQKQTR (79 aa)). A run of 2 helical transmembrane segments spans residues 16–32 (LVPL…VLAA) and 46–68 (YFRY…GMYY). Positions 68–126 (YQKESAEQKQTREDKLREKAKLREQLWIEELERRDQLIKARKQRLEESKKELMKVAQEG) form a coiled coil.

The protein belongs to the RCF1 family. Associates with the respiratory chain complex III/complex IV supercomplex.

Its subcellular location is the mitochondrion membrane. Its function is as follows. Cytochrome c oxidase subunit which plays a role in assembly of respiratory supercomplexes. The sequence is that of Respiratory supercomplex factor 1, mitochondrial (RCF1) from Clavispora lusitaniae (strain ATCC 42720) (Yeast).